Consider the following 219-residue polypeptide: Octanoyltransferase (219 aa).

Residues 31-219 (EDLPGFLVFC…KLKRRLLEVL (189 aa)) enclose the BPL/LPL catalytic domain. Residues 69–76 (RGGRATYH), 153–155 (SVG), and 166–168 (GAA) contribute to the substrate site. C184 acts as the Acyl-thioester intermediate in catalysis.

Belongs to the LipB family.

The protein localises to the cytoplasm. The catalysed reaction is octanoyl-[ACP] + L-lysyl-[protein] = N(6)-octanoyl-L-lysyl-[protein] + holo-[ACP] + H(+). The protein operates within protein modification; protein lipoylation via endogenous pathway; protein N(6)-(lipoyl)lysine from octanoyl-[acyl-carrier-protein]: step 1/2. Functionally, catalyzes the transfer of endogenously produced octanoic acid from octanoyl-acyl-carrier-protein onto the lipoyl domains of lipoate-dependent enzymes. Lipoyl-ACP can also act as a substrate although octanoyl-ACP is likely to be the physiological substrate. This is Octanoyltransferase from Bdellovibrio bacteriovorus (strain ATCC 15356 / DSM 50701 / NCIMB 9529 / HD100).